Consider the following 482-residue polypeptide: tRNA sulfurtransferase (482 aa).

The THUMP domain occupies Leu61–Arg165. Residues Leu183 to Ile184, Lys265, Gly287, and Gln296 contribute to the ATP site. A disulfide bridge links Cys344 with Cys456. Positions Phe404–Pro482 constitute a Rhodanese domain. Cys456 serves as the catalytic Cysteine persulfide intermediate.

It belongs to the ThiI family.

The protein resides in the cytoplasm. It carries out the reaction [ThiI sulfur-carrier protein]-S-sulfanyl-L-cysteine + a uridine in tRNA + 2 reduced [2Fe-2S]-[ferredoxin] + ATP + H(+) = [ThiI sulfur-carrier protein]-L-cysteine + a 4-thiouridine in tRNA + 2 oxidized [2Fe-2S]-[ferredoxin] + AMP + diphosphate. It catalyses the reaction [ThiS sulfur-carrier protein]-C-terminal Gly-Gly-AMP + S-sulfanyl-L-cysteinyl-[cysteine desulfurase] + AH2 = [ThiS sulfur-carrier protein]-C-terminal-Gly-aminoethanethioate + L-cysteinyl-[cysteine desulfurase] + A + AMP + 2 H(+). The protein operates within cofactor biosynthesis; thiamine diphosphate biosynthesis. Functionally, catalyzes the ATP-dependent transfer of a sulfur to tRNA to produce 4-thiouridine in position 8 of tRNAs, which functions as a near-UV photosensor. Also catalyzes the transfer of sulfur to the sulfur carrier protein ThiS, forming ThiS-thiocarboxylate. This is a step in the synthesis of thiazole, in the thiamine biosynthesis pathway. The sulfur is donated as persulfide by IscS. In Escherichia coli (strain 55989 / EAEC), this protein is tRNA sulfurtransferase.